The following is a 78-amino-acid chain: MQSQESGVHYSRWDSSSRDEVSMTAMSSSEEASCYRRISQKLCSGKLGIAMKVLGGVALFWIIFILGYITGYYVHKCK.

Methionine 1 carries the post-translational modification N-acetylmethionine. The disordered stretch occupies residues 1-22; it reads MQSQESGVHYSRWDSSSRDEVS. The Cytoplasmic portion of the chain corresponds to 1 to 48; it reads MQSQESGVHYSRWDSSSRDEVSMTAMSSSEEASCYRRISQKLCSGKLG. Serine 6, serine 17, serine 22, and serine 27 each carry phosphoserine. Over residues 11–21 the composition is skewed to basic and acidic residues; sequence SRWDSSSRDEV. Residues 49 to 69 form a helical; Signal-anchor for type II membrane protein membrane-spanning segment; that stretch reads IAMKVLGGVALFWIIFILGYI. Topologically, residues 70-78 are extracellular; that stretch reads TGYYVHKCK.

This sequence belongs to the SMIM1 family. In terms of assembly, homooligomer; disulfide-linked.

It is found in the cell membrane. Its function is as follows. Regulator of red blood cell formation. The protein is Small integral membrane protein 1 of Mus musculus (Mouse).